Reading from the N-terminus, the 356-residue chain is Pavine N-methyltransferase (356 aa).

Positions 96, 97, 135, 159, 163, 185, 186, and 201 each coordinate S-adenosyl-L-homocysteine. S-adenosyl-L-methionine-binding residues include phenylalanine 96, serine 97, glycine 135, asparagine 159, glutamine 163, aspartate 185, valine 186, and valine 201. Glutamate 205 provides a ligand contact to (S)-tetrahydropapaverine. Cysteine 331 is an active-site residue.

The protein belongs to the CFA/CMAS family. In terms of assembly, homodimer.

It is found in the cytoplasm. It carries out the reaction (+-)-pavine + S-adenosyl-L-methionine = N-methylpavine + S-adenosyl-L-homocysteine + H(+). It catalyses the reaction (S)-reticuline + S-adenosyl-L-methionine = (S)-tembetarine + S-adenosyl-L-homocysteine + H(+). The enzyme catalyses (S)-stylopine + S-adenosyl-L-methionine = (S)-cis-N-methylstylopine + S-adenosyl-L-homocysteine. The catalysed reaction is (S)-scoulerine + S-adenosyl-L-methionine = (S)-cis-N-methylscoulerine + S-adenosyl-L-homocysteine. It carries out the reaction (S)-tetrahydropapaverine + S-adenosyl-L-methionine = (S)-N-methyltetrahydropapaverine + S-adenosyl-L-homocysteine + H(+). It catalyses the reaction (S)-tetrahydropalmatine + S-adenosyl-L-methionine = (S)-cis-N-methyltetrahydropalmatine + S-adenosyl-L-homocysteine. It functions in the pathway alkaloid biosynthesis. With respect to regulation, in the presence of a racemic mixture of tetrahydropapaverine (THP), one molecule of (S)-THP binds in a productive mode, while one molecule of (R)-THP is bound next to it in a non-productive mode. The (R)-THP seems to inhibit the release of products from the enzyme when higher concentrations of the racemic substrate are added to the reaction. N-methyltransferase with a substrate preference for (+-)-pavine and (S)-reticuline, but also active with the protoberberines scoulerine and stylopine and, to a lesser extent, tetrahydropapaverine (THP) and tetrahydropalmatine. Is not active on (R)-reticuline, cryptopine, glaucine, codeine, canadaline, noscapine and berbamine. The protein is Pavine N-methyltransferase of Thalictrum flavum subsp. glaucum (Yellow meadow rue).